A 405-amino-acid chain; its full sequence is Terpene cyclase pbrA (405 aa).

Residues D103, E168, N229, S233, E237, and D241 each coordinate Mg(2+). Residues 103–108 (DDEISS) carry the D(D/E)XX(D/E) motif motif. An NSE motif motif is present at residues 227–237 (LVNDLFSFYKE). Residues 316 to 323 (EDLGGSSA) carry the WxxxxxRY motif motif.

The protein belongs to the trichodiene synthase family. Mg(2+) serves as cofactor.

It participates in secondary metabolite biosynthesis; terpenoid biosynthesis. In terms of biological role, terpene cyclase; part of the gene cluster that mediates the biosynthesis of the sesquiterpenoid aspterric acid (AA), an inhibitor of dihydroxy-acid dehydratase (DHAD) effective as an herbicide. PbrA cyclizes farnesyl diphosphate (FPP) to produce (-)-daucane. The cytochrome P450 monooxygenase pbrBB then converts (-)-daucane into the alpha-epoxy carboxylate intermediate which is further converted into the tricyclic aspterric acid by the cytochrome P450 monooxygenase pbrC. The protein is Terpene cyclase pbrA of Penicillium brasilianum.